A 329-amino-acid chain; its full sequence is 4-hydroxythreonine-4-phosphate dehydrogenase (329 aa).

Substrate-binding residues include histidine 136 and threonine 137. Histidine 166, histidine 211, and histidine 266 together coordinate a divalent metal cation. Substrate-binding residues include lysine 274, asparagine 283, and arginine 292.

This sequence belongs to the PdxA family. In terms of assembly, homodimer. Zn(2+) serves as cofactor. Mg(2+) is required as a cofactor. It depends on Co(2+) as a cofactor.

The protein localises to the cytoplasm. It carries out the reaction 4-(phosphooxy)-L-threonine + NAD(+) = 3-amino-2-oxopropyl phosphate + CO2 + NADH. The protein operates within cofactor biosynthesis; pyridoxine 5'-phosphate biosynthesis; pyridoxine 5'-phosphate from D-erythrose 4-phosphate: step 4/5. Functionally, catalyzes the NAD(P)-dependent oxidation of 4-(phosphooxy)-L-threonine (HTP) into 2-amino-3-oxo-4-(phosphooxy)butyric acid which spontaneously decarboxylates to form 3-amino-2-oxopropyl phosphate (AHAP). This is 4-hydroxythreonine-4-phosphate dehydrogenase from Shigella sonnei (strain Ss046).